The following is a 348-amino-acid chain: MSKPNQTLGEFIIENQSDFPGSSGELSRLINSLRLAAKVVNHEVNKAGLVDIIGAYGETNVQGEDQQKLDVYANNKFIQTLTNREIVCGIASEENDDFIQIEGHKGDHQNKYVVLMDPLDGSSNIDVNVSVGTIFSIYQRVTPVGTPVQKEDFLQPGNKQVAAGYIIYGTSTMLVYTTGHGVNGFTLNPALGSWYLSHPDMKFPEEGQIYSINEGNYIHFPQGVKDYIKYCQQEEGNRPYTSRYIGSMVSDIHRNMIKGGIFMYPKSSKASEGKLRLLYECNPFAFITEQAGGKASDGFQRIMDIDPTELHQRVPFFCGSKKMVEKAEEFMANAKANPQSQEFSFSSK.

4 residues coordinate Mg(2+): glutamate 93, aspartate 117, leucine 119, and aspartate 120. Substrate contacts are provided by residues 120–123, asparagine 213, tyrosine 244, and lysine 274; that span reads DGSS. Glutamate 280 contributes to the Mg(2+) binding site.

The protein belongs to the FBPase class 1 family. In terms of assembly, homotetramer. It depends on Mg(2+) as a cofactor.

Its subcellular location is the cytoplasm. It carries out the reaction beta-D-fructose 1,6-bisphosphate + H2O = beta-D-fructose 6-phosphate + phosphate. It functions in the pathway carbohydrate biosynthesis; gluconeogenesis. The sequence is that of Fructose-1,6-bisphosphatase class 1 2 from Christiangramia forsetii (strain DSM 17595 / CGMCC 1.15422 / KT0803) (Gramella forsetii).